The chain runs to 144 residues: Large ribosomal subunit protein uL15 (144 aa).

A disordered region spans residues 1 to 49 (MRLNTLSPAAGAKSAAKRVGRGIGSGTGKTCGRGHKGQKSRSGGGVRVG). The span at 21 to 31 (RGIGSGTGKTC) shows a compositional bias: gly residues.

Belongs to the universal ribosomal protein uL15 family. Part of the 50S ribosomal subunit.

Functionally, binds to the 23S rRNA. This chain is Large ribosomal subunit protein uL15, found in Shewanella halifaxensis (strain HAW-EB4).